The chain runs to 440 residues: Putative sodium-coupled neutral amino acid transporter 8 (440 aa).

The next 11 helical transmembrane spans lie at 29–49 (AIFIMLKSALGAGLLNFPWAF), 58–78 (AIMVELVSLIFLISGLVILGY), 100–120 (IGKLCGICYIINLFMICVAFL), 156–176 (FAITVLCLVIILPLSIPKEIS), 183–203 (ILGTLAACYLTVMIIIKYYVM), 223–243 (MFSVVPTICFGFQCHEACVTI), 255–275 (WAAVSVVSMLICLLIYSFTGI), 300–320 (VIIARLLFTISIITIYPIILL), 350–370 (VVITVLWILVTLLIALFVPDI), 373–393 (VISVIGGISAFFIFIFPGLCL), and 418–438 (VVCGAFVFGQSTTIAVMEIIA).

The protein belongs to the amino acid/polyamine transporter 2 family.

Its subcellular location is the membrane. Functionally, putative sodium-dependent amino acid/proton antiporter. This chain is Putative sodium-coupled neutral amino acid transporter 8 (slc38a8), found in Xenopus tropicalis (Western clawed frog).